A 563-amino-acid chain; its full sequence is Arginine--tRNA ligase (563 aa).

The 'HIGH' region signature appears at 121–131 (PNIAKPFSIGH).

This sequence belongs to the class-I aminoacyl-tRNA synthetase family. As to quaternary structure, monomer.

The protein resides in the cytoplasm. The catalysed reaction is tRNA(Arg) + L-arginine + ATP = L-arginyl-tRNA(Arg) + AMP + diphosphate. In Streptococcus pneumoniae serotype 19F (strain G54), this protein is Arginine--tRNA ligase.